A 144-amino-acid polypeptide reads, in one-letter code: INO80 complex subunit 5 (144 aa).

The segment at 1–58 (MAAQKKQGERVLPARSTRKRRQLPDMLYYDERTDSYVTPQERSLSEANAQTRPAPNTI) is disordered. Polar residues predominate over residues 35–58 (SYVTPQERSLSEANAQTRPAPNTI).

In terms of assembly, component of the INO80 chromatin remodeling complex.

It is found in the nucleus. In terms of biological role, component of the INO80 complex which remodels chromatin by shifting nucleosomes and is involved in DNA repair. This chain is INO80 complex subunit 5 (iec5), found in Schizosaccharomyces pombe (strain 972 / ATCC 24843) (Fission yeast).